We begin with the raw amino-acid sequence, 454 residues long: NADP-specific glutamate dehydrogenase (454 aa).

S2 is subject to N-acetylserine. The active site involves K114.

This sequence belongs to the Glu/Leu/Phe/Val dehydrogenases family. In terms of assembly, homohexamer.

It carries out the reaction L-glutamate + NADP(+) + H2O = 2-oxoglutarate + NH4(+) + NADPH + H(+). This is NADP-specific glutamate dehydrogenase (GDH) from Neurospora intermedia.